The chain runs to 86 residues: Anti-adapter protein IraP (86 aa).

Positions 1–36 form a coiled coil; it reads MKNLIAELLFKLAQKEEESKELCAQVEALEIIVTAM.

This sequence belongs to the IraP family. In terms of assembly, interacts with RssB.

It is found in the cytoplasm. Inhibits RpoS proteolysis by regulating RssB activity, thereby increasing the stability of the sigma stress factor RpoS especially during phosphate starvation, but also in stationary phase and during nitrogen starvation. Its effect on RpoS stability is due to its interaction with RssB, which probably blocks the interaction of RssB with RpoS, and the consequent delivery of the RssB-RpoS complex to the ClpXP protein degradation pathway. In Escherichia coli O7:K1 (strain IAI39 / ExPEC), this protein is Anti-adapter protein IraP.